A 279-amino-acid polypeptide reads, in one-letter code: Cyanocobalamin reductase / alkylcobalamin dealkylase (279 aa).

Residues aspartate 104, 115 to 118, 129 to 131, cysteine 149, and isoleucine 160 each bind substrate; these read ILAQ and YYQ. The disordered stretch occupies residues 239-279; that stretch reads PSEHPSTTSELPLSLLTKPQNSRRARSWLSPSVSPPVSPGP. Over residues 243 to 257 the composition is skewed to low complexity; sequence PSTTSELPLSLLTKP. Residues serine 247, serine 272, and serine 276 each carry the phosphoserine modification.

It belongs to the MMACHC family. As to quaternary structure, monomer in the absence of bound substrate. Homodimer; dimerization is triggered by binding to FMN or adenosylcobalamin. Interacts with LMBRD1 and ABCD4; the interaction ensures the transport of cobalamin from the lysosome to the cytoplasm. Forms a multiprotein complex with MMADHC, MTR and MTRR; the interaction with MTR could modulate MMACHC-dependent processing of cobalamin. Heterodimer with MMADHC; the interaction might play a role in the regulation of the balance between AdoCbl and MeCbl synthesis. Requires FAD as cofactor. FMN serves as cofactor. In terms of tissue distribution, detected in liver and kidney (at protein level). Detected in embryos.

The protein localises to the cytoplasm. The protein resides in the cytosol. The enzyme catalyses 2 cob(II)alamin-[cyanocobalamin reductase] + 2 hydrogen cyanide + NADP(+) = 2 cyanocob(III)alamin + 2 apo-[cyanocobalamin reductase] + NADPH + H(+). It carries out the reaction apo-[alkylcobalamin reductase] + an R-cob(III)alamin + glutathione = cob(I)alamin-[alkylcobalamin reductase] + an S-substituted glutathione + H(+). It catalyses the reaction apo-[alkylcobalamin reductase] + methylcob(III)alamin + glutathione = S-methyl glutathione + cob(I)alamin-[alkylcobalamin reductase] + H(+). The catalysed reaction is apo-[alkylcobalamin reductase] + adenosylcob(III)alamin + glutathione = S-adenosylglutathione + cob(I)alamin-[alkylcobalamin reductase] + H(+). In terms of biological role, cobalamin (vitamin B12) cytosolic chaperone that catalyzes the reductive decyanation of cyanocob(III)alamin (cyanocobalamin, CNCbl) to yield cob(II)alamin and cyanide, using FAD or FMN as cofactors and NADPH as cosubstrate. Cyanocobalamin constitutes the inactive form of vitamin B12 introduced from the diet, and is converted into the active cofactors methylcobalamin (MeCbl) involved in methionine biosynthesis, and 5'-deoxyadenosylcobalamin (AdoCbl) involved in the TCA cycle. Forms a complex with the lysosomal transporter ABCD4 and its chaperone LMBRD1, to transport cobalamin across the lysosomal membrane into the cytosol. The processing of cobalamin in the cytosol occurs in a multiprotein complex composed of at least MMACHC, MMADHC, MTRR (methionine synthase reductase) and MTR (methionine synthase) which may contribute to shuttle safely and efficiently cobalamin towards MTR in order to produce methionine. Also acts as a glutathione transferase by catalyzing the dealkylation of the alkylcob(III)alamins MeCbl and AdoCbl, using the thiolate of glutathione for nucleophilic displacement to generate cob(I)alamin and the corresponding glutathione thioether. The conversion of incoming MeCbl or AdoCbl into a common intermediate cob(I)alamin is necessary to meet the cellular needs for both cofactors. Cysteine and homocysteine cannot substitute for glutathione in this reaction. The polypeptide is Cyanocobalamin reductase / alkylcobalamin dealkylase (Mus musculus (Mouse)).